A 349-amino-acid polypeptide reads, in one-letter code: S-adenosylmethionine:tRNA ribosyltransferase-isomerase (349 aa).

The protein belongs to the QueA family. In terms of assembly, monomer.

The protein resides in the cytoplasm. The enzyme catalyses 7-aminomethyl-7-carbaguanosine(34) in tRNA + S-adenosyl-L-methionine = epoxyqueuosine(34) in tRNA + adenine + L-methionine + 2 H(+). It functions in the pathway tRNA modification; tRNA-queuosine biosynthesis. Functionally, transfers and isomerizes the ribose moiety from AdoMet to the 7-aminomethyl group of 7-deazaguanine (preQ1-tRNA) to give epoxyqueuosine (oQ-tRNA). This is S-adenosylmethionine:tRNA ribosyltransferase-isomerase from Pseudomonas entomophila (strain L48).